We begin with the raw amino-acid sequence, 804 residues long: General transcription and DNA repair factor IIH helicase/translocase subunit XPB (804 aa).

Disordered regions lie at residues M1–E61 and Q220–S255. Residues P14 to D36 are compositionally biased toward acidic residues. Composition is skewed to low complexity over residues N47–N60 and Q220–P229. A compositionally biased stretch (basic and acidic residues) spans E236–S255. The 163-residue stretch at M335–M497 folds into the Helicase ATP-binding domain. L348–T355 lines the ATP pocket. The short motif at D450–H453 is the DEVH box element. The region spanning Q551–E705 is the Helicase C-terminal domain. 2 disordered regions span residues D736–S761 and K782–R804. The segment covering L784–A793 has biased composition (basic and acidic residues). A compositionally biased stretch (basic residues) spans L794–R804.

It belongs to the helicase family. RAD25/XPB subfamily. As to quaternary structure, component of the 7-subunit TFIIH core complex composed of XPB/ptr8, XPD/rad15, ssl1, tfb1, tfb2, tfb4 and tfb5, which is active in NER. The core complex associates with the 3-subunit CTD-kinase module TFIIK composed of mcs2/cyclin H, mcs6/cdk7 and pmh1/tfb3 to form the 10-subunit holoenzyme (holo-TFIIH) active in transcription.

The protein resides in the nucleus. It catalyses the reaction Couples ATP hydrolysis with the unwinding of duplex DNA by translocating in the 3'-5' direction.. The enzyme catalyses ATP + H2O = ADP + phosphate + H(+). In terms of biological role, probable ATP-dependent 3'-5' DNA helicase/translocase. Binds dsDNA rather than ssDNA, unzipping it in a translocase rather than classical helicase activity. Component of the general transcription and DNA repair factor IIH (TFIIH) core complex. When complexed to CDK-activating kinase (CAK), involved in RNA transcription by RNA polymerase II. Also involved in transcription-coupled nucleotide excision repair (NER) of damaged DNA. In NER, TFIIH acts by opening DNA around the lesion to allow the excision of the damaged oligonucleotide and its replacement by a new DNA fragment. The ATPase activity of XPB/ptr8, but not its helicase activity, is required for DNA opening. In transcription, TFIIH has an essential role in transcription initiation. When the pre-initiation complex (PIC) has been established, TFIIH is required for promoter opening and promoter escape. The ATP-dependent helicase activity of XPB/ptr8 is required for promoter escape but not for promoter opening. Plays a role in mRNA export. The chain is General transcription and DNA repair factor IIH helicase/translocase subunit XPB from Schizosaccharomyces pombe (strain 972 / ATCC 24843) (Fission yeast).